A 1093-amino-acid polypeptide reads, in one-letter code: Fused isobutyryl-CoA mutase (1093 aa).

The segment at 1-20 is disordered; that stretch reads MTDLSDVSRTAAAKPPAVPG. Residues 26–156 enclose the B12-binding domain; it reads KVRFVTAASL…AGMITDMAQR (131 aa). Residue His39 coordinates adenosylcob(III)alamin. Positions 169 to 417 are GTPase chaperone MeaI; sequence LDTVVAGDRR…YQGLVGALGA (249 aa). Position 219-224 (219-224) interacts with GTP; that stretch reads GAGKSS. Residues Ser223, Ile248, Asp249, and Asp262 each contribute to the Mg(2+) site. Arg265 lines the GTP pocket. Mg(2+)-binding residues include Glu310 and Thr311. Residue 357 to 360 participates in GTP binding; that stretch reads NKFD. The segment at 418–579 is linker; sequence RGMSLKPGTL…MRENVPGSFP (162 aa). Substrate contacts are provided by Phe587, Arg622, Arg728, Tyr772, Ser821, Arg856, and Lys861. Positions 973 and 1092 each coordinate GTP.

This sequence belongs to the IcmF family. In terms of assembly, homodimer. Adenosylcob(III)alamin is required as a cofactor. It depends on Mg(2+) as a cofactor.

It carries out the reaction 2-methylpropanoyl-CoA = butanoyl-CoA. The catalysed reaction is 3-methylbutanoyl-CoA = 2,2-dimethylpropanoyl-CoA. It catalyses the reaction GTP + H2O = GDP + phosphate + H(+). Its activity is regulated as follows. Is prone to inactivation during catalytic turnover due to the occasional loss of the 5'-deoxyadenosine moiety and formation of the inactive cob(II)alamin cofactor in its active site. The GTPase activity of IcmF powers the ejection of the inactive cofactor and requires the presence of an acceptor protein, adenosyltransferase (ATR), for receiving it. ATR, in turn, catalyzes an adenosylation reaction converting cob(II)alamin in the presence of ATP and a reductant to the active AdoCbl cofactor. The repaired cofactor is then reloaded onto IcmF in a GTPase-gated step, regenerating active enzyme. The GTPase activity of IcmF is significantly decreased in the presence of excess of AdoCbl or cob(II)alamin and is higher in the apoenzyme state, indicating that the G-domain senses the presence and identity of the cofactor in the mutase active site. In terms of biological role, catalyzes the reversible interconversion of isobutyryl-CoA and n-butyryl-CoA, and to a much lesser extent, of pivalyl-CoA and isovaleryl-CoA, using radical chemistry. Also exhibits GTPase activity, associated with its G-protein domain (MeaI) that functions as a chaperone that assists cofactor delivery and proper holo-enzyme assembly. The G-domain of IcmF also has a role in its cofactor repair. Does not display ATPase activity. The protein is Fused isobutyryl-CoA mutase of Cupriavidus metallidurans (strain ATCC 43123 / DSM 2839 / NBRC 102507 / CH34) (Ralstonia metallidurans).